Consider the following 464-residue polypeptide: Arginine biosynthesis bifunctional protein ArgJ, chloroplastic (464 aa).

6 residues coordinate substrate: Thr-208, Lys-234, Thr-245, Glu-332, Asn-459, and Thr-464. Catalysis depends on Thr-245, which acts as the Nucleophile.

This sequence belongs to the ArgJ family. Heterodimer of an alpha and a beta chain.

The protein localises to the plastid. It is found in the chloroplast. The enzyme catalyses N(2)-acetyl-L-ornithine + L-glutamate = N-acetyl-L-glutamate + L-ornithine. The catalysed reaction is L-glutamate + acetyl-CoA = N-acetyl-L-glutamate + CoA + H(+). It participates in amino-acid biosynthesis; L-arginine biosynthesis; L-ornithine and N-acetyl-L-glutamate from L-glutamate and N(2)-acetyl-L-ornithine (cyclic): step 1/1. Its pathway is amino-acid biosynthesis; L-arginine biosynthesis; N(2)-acetyl-L-ornithine from L-glutamate: step 1/4. In terms of biological role, catalyzes two activities which are involved in the cyclic version of arginine biosynthesis: the synthesis of acetylglutamate from glutamate and acetyl-CoA, and of ornithine by transacetylation between acetylornithine and glutamate. The sequence is that of Arginine biosynthesis bifunctional protein ArgJ, chloroplastic from Zea mays (Maize).